A 715-amino-acid chain; its full sequence is MSQHIRKLDSDVSERLKSQACTVSLASAVREIVQNSVDAHATTIDVMIDLPNLSFAVYDDGIGLTRSDLNILATQNYTSKIRKMNDLVTMKTYGYRGDALYSISNVSNLFVCSKKKDYNSAWMRKFPSKSVMLSENTILPIDPFWKICPWSRTKSGTVVIVEDMLYNLPVRRRILKEEPPFKTFNTIKADMLQILVMHPMISLNVQYTDKLRINTEVLFRSKNITEGLTKHQQMSQVLRNVFGAIIPPDMLKKVSLKFNEYQIEGIISKMPVGLKDLQFIYINGRRYADSAFQGYVDSLFQAQDFGEKGMSLLKTKSVGKPYRSHPVFILDVRCPQTIDDLLQDPAKKIVKPSHIRTIEPLIVKTIRSFLTFQGYLTPDKSDSSFEIVNCSQKTATLPDSRIQISKRNQVLNSKMKIARINSYIGKPAVNGCRINNSTINYEKIKNIRIDGQKSRLRNKLSSRPYDSGFTEDYDSIGKTITDFSISRSVLAKYEVINQVDKKFILIRCLDQSIHNCPLLVLVDQHACDERIRLEELFYSLLTEVVTGTFVARDLKDCCIEVDRTEADLFKHYQSEFKKWGIGYETIEGTMETSLLEIKTLPEMLTSKYNGDKDYLKMVLLQHAHDLKDFKKLPMDLSHFENYTSVDKLYWWKYSSCVPTVFHEILNSKACRSAVMFGDELTRQECIILISKLSRCHNPFECAHGRPSMVPIAELK.

It belongs to the DNA mismatch repair MutL/HexB family. In terms of assembly, heterodimer of MLH1 and MLH3, called MutLbeta, which is involved in correction of a specific subset of IDLs when associated with MutSbeta. Forms a ternary complex with a SGS1-TOP3 heterodimer during meiosis.

The protein resides in the nucleus. In terms of biological role, involved in DNA mismatch repair (MMR), correcting insertion-deletion loops (IDLs) resulting from DNA replication, DNA damage or from recombination events between non-identical sequences during meiosis. Component of the MutLbeta heterodimer, which probably forms a ternary complex with the MutSbeta heterodimer that initially recognizes the DNA mismatches. This complex is thought to be responsible for directing the downstream MMR events, including strand discrimination, excision, and resynthesis. Plays a major role in promoting meiotic crossing-over and is involved in maintaining the genetic stability of simple sequence repeats by correction of frameshift intermediates. In Saccharomyces cerevisiae (strain ATCC 204508 / S288c) (Baker's yeast), this protein is DNA mismatch repair protein MLH3 (MLH3).